Reading from the N-terminus, the 200-residue chain is LexA repressor (200 aa).

The H-T-H motif DNA-binding region spans 29-48 (IRDIARAFRITPRGAIVHLN). Catalysis depends on for autocatalytic cleavage activity residues Ser120 and Lys158.

Belongs to the peptidase S24 family. Homodimer.

It carries out the reaction Hydrolysis of Ala-|-Gly bond in repressor LexA.. In terms of biological role, represses a number of genes involved in the response to DNA damage (SOS response), including recA and lexA. In the presence of single-stranded DNA, RecA interacts with LexA causing an autocatalytic cleavage which disrupts the DNA-binding part of LexA, leading to derepression of the SOS regulon and eventually DNA repair. This Pseudothermotoga lettingae (strain ATCC BAA-301 / DSM 14385 / NBRC 107922 / TMO) (Thermotoga lettingae) protein is LexA repressor.